The primary structure comprises 521 residues: Glutamate--cysteine ligase (521 aa).

The protein belongs to the glutamate--cysteine ligase type 1 family. Type 1 subfamily.

The enzyme catalyses L-cysteine + L-glutamate + ATP = gamma-L-glutamyl-L-cysteine + ADP + phosphate + H(+). Its pathway is sulfur metabolism; glutathione biosynthesis; glutathione from L-cysteine and L-glutamate: step 1/2. The protein is Glutamate--cysteine ligase of Aliivibrio fischeri (strain MJ11) (Vibrio fischeri).